A 418-amino-acid polypeptide reads, in one-letter code: Adenylosuccinate synthetase (418 aa).

Residues Gly12–Lys18 and Gly40–Thr42 each bind GTP. Catalysis depends on Asp13, which acts as the Proton acceptor. Residues Asp13 and Gly40 each coordinate Mg(2+). Residues Asp13–Lys16, Asn38–His41, Thr128, Arg142, Gln221, Thr236, and Arg299 each bind IMP. His41 acts as the Proton donor in catalysis. Ala295–Arg301 serves as a coordination point for substrate. Residues Arg301, Lys327 to Asp329, and Ser399 to Gly401 each bind GTP.

This sequence belongs to the adenylosuccinate synthetase family. Homodimer. Requires Mg(2+) as cofactor.

The protein localises to the cytoplasm. The enzyme catalyses IMP + L-aspartate + GTP = N(6)-(1,2-dicarboxyethyl)-AMP + GDP + phosphate + 2 H(+). It functions in the pathway purine metabolism; AMP biosynthesis via de novo pathway; AMP from IMP: step 1/2. In terms of biological role, plays an important role in the de novo pathway of purine nucleotide biosynthesis. Catalyzes the first committed step in the biosynthesis of AMP from IMP. This is Adenylosuccinate synthetase from Finegoldia magna (strain ATCC 29328 / DSM 20472 / WAL 2508) (Peptostreptococcus magnus).